Here is a 345-residue protein sequence, read N- to C-terminus: MELKGKKITVHDMTLRDGMHPKRHLMTLEQMKSVAQGLDAAGVPLIEVTHGDGLGGASVNYGFPAHSDEEYLSTVIPLMKQAKVSALLLPGIGTVDHLQMAHELGVTTIRVATHCTEADVSEQHITAARKLGMDTVGFLMMAHMNSAEGLVKQAKLMEGYGANCVYVTDSAGYLLPDQVKERIAAVRAALKPETELGFHGHHNLAMGVANSIAAVEAGANRIDAAAAGLGAGAGNTPMEVLVAVCERMGIETGVDVWKIQDVAEDLVVPLMDFPIRVDRDALTLGYAGVYGSFLLFAKRAEKKYGIPARDLLVELGRRGMVGGQEDMIEDTALTMARARGIKVAA.

One can recognise a Pyruvate carboxyltransferase domain in the interval 8 to 260; that stretch reads ITVHDMTLRD…ETGVDVWKIQ (253 aa). 16 to 17 contributes to the substrate binding site; it reads RD. Asp-17 contacts Mn(2+). The Proton acceptor role is filled by His-20. Residues Ser-170 and His-199 each coordinate substrate. Positions 199 and 201 each coordinate Mn(2+). Tyr-290 provides a ligand contact to substrate.

Belongs to the 4-hydroxy-2-oxovalerate aldolase family.

It carries out the reaction (S)-4-hydroxy-2-oxopentanoate = acetaldehyde + pyruvate. The protein is 4-hydroxy-2-oxovalerate aldolase 3 (aphG) of Comamonas testosteroni (Pseudomonas testosteroni).